The chain runs to 143 residues: MGMVSEFKQFAMRGNVIDLAVGVVIGAAFGKIVTALVEKIIMPPIGWAIGNVDFSRLAWVLKPAGVDATGKEIPAVAIGYGDFINTVVQFLIIAFAIFLVVKLINRVTHRKPDAPKGPSEEVLLLREIRDALKNDTLKPPGAL.

The next 2 membrane-spanning stretches (helical) occupy residues 16–36 (VIDLAVGVVIGAAFGKIVTAL) and 84–104 (INTVVQFLIIAFAIFLVVKLI).

The protein belongs to the MscL family. Homopentamer.

It is found in the cell inner membrane. Its function is as follows. Channel that opens in response to stretch forces in the membrane lipid bilayer. May participate in the regulation of osmotic pressure changes within the cell. In Xanthomonas axonopodis pv. citri (strain 306), this protein is Large-conductance mechanosensitive channel.